The chain runs to 390 residues: Precorrin-6Y C(5,15)-methyltransferase [decarboxylating] (390 aa).

Belongs to the precorrin methyltransferase family.

It catalyses the reaction precorrin-6B + 2 S-adenosyl-L-methionine = precorrin-8X + 2 S-adenosyl-L-homocysteine + CO2 + 3 H(+). It functions in the pathway cofactor biosynthesis; adenosylcobalamin biosynthesis; cob(II)yrinate a,c-diamide from precorrin-2 (aerobic route): step 7/10. In terms of biological role, catalyzes the methylation of both C-5 and C-15 in precorrin-6Y to form precorrin-8X. The sequence is that of Precorrin-6Y C(5,15)-methyltransferase [decarboxylating] (cobL) from Mycobacterium tuberculosis (strain ATCC 25618 / H37Rv).